The primary structure comprises 855 residues: MICAL-like protein 1 (855 aa).

The Calponin-homology (CH) domain occupies 2–108; it reads AGPRGALLAW…YVSQYYNHFT (107 aa). Disordered regions lie at residues 110–165, 226–253, and 269–659; these read SGQA…SSAC, GRSG…EDSD, and QASS…HGFP. The segment covering 124–135 has biased composition (low complexity); the sequence is PAAPSPTSTSPA. The region spanning 163–226 is the LIM zinc-binding domain; sequence SACAACGQRV…ERCTRLGLGG (64 aa). The span at 269 to 278 shows a compositional bias: polar residues; sequence QASSEVQPHT. Residues Ser293 and Ser307 each carry the phosphoserine modification. Residues 308–325 are compositionally biased toward polar residues; that stretch reads ESSALTPPTPRPRSSLQQ. 2 positions are modified to phosphothreonine: Thr313 and Thr316. Over residues 356 to 367 the composition is skewed to basic and acidic residues; the sequence is LSERMTAPRKDP. An NPF1 motif is present at residues 423 to 425; it reads NPF. A compositionally biased stretch (acidic residues) spans 425 to 434; that stretch reads FEEEEEEEEA. Positions 439 to 449 are enriched in pro residues; it reads VPSPAPAPPET. Residues Thr461 and Thr463 each carry the phosphothreonine modification. Phosphoserine occurs at positions 464, 465, 478, and 480. The segment covering 499–514 has biased composition (low complexity); sequence PSPALSVESLSSESSS. Residues 542 to 554 are compositionally biased toward polar residues; the sequence is PGTSANSVTPSAH. Positions 555–570 are enriched in low complexity; it reads SSLSSSGELGQPSGEQ. Ser613 carries the phosphoserine modification. Positions 625-627 match the NPF2 motif; it reads NPF. The tract at residues 644–855 is mediates the interaction with RAB13 and intramolecular interaction with the calponin-homology (CH) domain; it reads KGAKPVRPPA…AKSKAPTGKS (212 aa). A bMERB domain is found at 663–810; sequence RKVQADQYIP…EEEEDKMLET (148 aa). The stretch at 679–703 forms a coiled coil; sequence EMDSIERQLDALEHSGVLLEEKLRG. Ser682 and Ser732 each carry phosphoserine. The tract at residues 692 to 855 is necessary and sufficient to associate with tubular recycling endosome membranes, mediate phosphatidic acid-binding and membrane tubulation; that stretch reads HSGVLLEEKL…AKSKAPTGKS (164 aa). Positions 794–822 form a coiled coil; that stretch reads LDEDRQREEEEDKMLETMIKKKDFQREAE. Positions 815–826 are enriched in basic and acidic residues; the sequence is KDFQREAESDSK. The segment at 815-855 is disordered; it reads KDFQREAESDSKKKGKFKTMKVLKLLGNKRDAKSKAPTGKS.

Homooligomer. Interacts (via NPF1 motif) with EHD1 (via EH domain); the interaction is direct and probably recruits EHD1 to membranes. Interacts with EHD3 (via EH domain). Interacts with RAB35 (GTP-bound form); the interaction is direct and probably recruits MICALL1 to membranes. Interacts with ACAP2; the interaction is indirect through RAB35. Interacts with RAB8A (GTP-bound form); regulates RAB8A association with recycling endosomes. Interacts with RAB13 (GTP-bound form). Interacts with ARF6 (GTP-bound form). Interacts with PACSIN2 (via the SH3 domain). Interacts with DPYSL2.

It localises to the recycling endosome membrane. It is found in the late endosome membrane. The protein localises to the cell projection. The protein resides in the cilium membrane. Its subcellular location is the cytoplasm. It localises to the cytoskeleton. It is found in the microtubule organizing center. The protein localises to the centrosome. The protein resides in the centriole. Its function is as follows. Lipid-binding protein with higher affinity for phosphatidic acid, a lipid enriched in recycling endosome membranes. On endosome membranes, acts as a downstream effector of Rab proteins recruiting cytosolic proteins to regulate membrane tubulation. Involved in a late step of receptor-mediated endocytosis regulating for instance endocytosed-EGF receptor trafficking. Alternatively, regulates slow endocytic recycling of endocytosed proteins back to the plasma membrane. Also involved in cargo protein delivery to the plasma membrane. Plays a role in ciliogenesis coordination, recruits EHD1 to primary cilium where it is anchored to the centriole through interaction with tubulins. May indirectly play a role in neurite outgrowth. The protein is MICAL-like protein 1 (Micall1) of Rattus norvegicus (Rat).